The chain runs to 273 residues: Dermonecrotic toxin LspaSicTox-alphaIA2iii (273 aa).

Residue histidine 5 is part of the active site. 2 residues coordinate Mg(2+): glutamate 25 and aspartate 27. Histidine 41 serves as the catalytic Nucleophile. 2 disulfides stabilise this stretch: cysteine 45/cysteine 51 and cysteine 47/cysteine 190. Residue aspartate 85 coordinates Mg(2+).

This sequence belongs to the arthropod phospholipase D family. Class II subfamily. Mg(2+) is required as a cofactor. In terms of tissue distribution, expressed by the venom gland.

The protein resides in the secreted. The enzyme catalyses an N-(acyl)-sphingosylphosphocholine = an N-(acyl)-sphingosyl-1,3-cyclic phosphate + choline. The catalysed reaction is an N-(acyl)-sphingosylphosphoethanolamine = an N-(acyl)-sphingosyl-1,3-cyclic phosphate + ethanolamine. It catalyses the reaction a 1-acyl-sn-glycero-3-phosphocholine = a 1-acyl-sn-glycero-2,3-cyclic phosphate + choline. It carries out the reaction a 1-acyl-sn-glycero-3-phosphoethanolamine = a 1-acyl-sn-glycero-2,3-cyclic phosphate + ethanolamine. In terms of biological role, dermonecrotic toxins cleave the phosphodiester linkage between the phosphate and headgroup of certain phospholipids (sphingolipid and lysolipid substrates), forming an alcohol (often choline) and a cyclic phosphate. This toxin acts on sphingomyelin (SM). It may also act on ceramide phosphoethanolamine (CPE), lysophosphatidylcholine (LPC) and lysophosphatidylethanolamine (LPE), but not on lysophosphatidylserine (LPS), and lysophosphatidylglycerol (LPG). It acts by transphosphatidylation, releasing exclusively cyclic phosphate products as second products. Induces dermonecrosis, hemolysis, increased vascular permeability, edema, inflammatory response, and platelet aggregation. The chain is Dermonecrotic toxin LspaSicTox-alphaIA2iii from Loxosceles spadicea (Recluse spider).